We begin with the raw amino-acid sequence, 426 residues long: Branched-chain amino acid permease BrnQ (426 aa).

12 helical membrane-spanning segments follow: residues 11–31 (LMLFSMFFGAGNLIFPPMLGL), 41–61 (ILGFLATSVLLPVLAIIAVVL), 76–96 (IFGLVFPIAAYLSIGAFYALP), 111–131 (NALYSGLFNFVFFAVALALSW), 140–160 (LGKWLTPALLTLIVVLVVLSV), 186–206 (GYMTMDAIAALAFGIVVISAF), 219–239 (VVSAFIAGILLALVYLGLGSI), 268–288 (IMFVAILILACMTTAVGLISA), 296–316 (LLPGVKYHVWATVFALISFGV), 324–344 (VLAVAAPVISFIYPSAITLVF), 358–378 (TYLFGIWTAVVWALFMSIPAL), and 390–410 (MSLGWVVPVLVASAIGLAIDW).

The protein belongs to the branched chain amino acid transporter family.

The protein resides in the cell membrane. Functionally, branched chain amino acid transport system, which transports isoleucine. The protein is Branched-chain amino acid permease BrnQ of Corynebacterium glutamicum (strain ATCC 13032 / DSM 20300 / JCM 1318 / BCRC 11384 / CCUG 27702 / LMG 3730 / NBRC 12168 / NCIMB 10025 / NRRL B-2784 / 534).